The sequence spans 446 residues: Iroquois-class homeodomain protein IRX-6 (446 aa).

A DNA-binding region (homeobox) is located at residues Gly-146 to Asn-208. Disordered regions lie at residues Asn-208–Glu-273 and Ala-362–Val-394. A compositionally biased stretch (basic and acidic residues) spans Lys-217–Gly-226. Over residues Leu-256 to Glu-273 the composition is skewed to acidic residues.

It belongs to the TALE/IRO homeobox family.

It is found in the nucleus. Functionally, transcription factor. Binds to the iroquois binding site (IBS) motif of target genes to regulate gene expression; functions as a transcriptional activator or repressor. Modulates expression of RCVRN, VSX1, BHLHE22/BHLHB5 and TACR3/Nk3r. Required downstream of retinal bipolar cell specification for the terminal differentiation of type 2, type 3a and possibly type 6 bipolar cells. The chain is Iroquois-class homeodomain protein IRX-6 (IRX6) from Homo sapiens (Human).